Consider the following 324-residue polypeptide: o-succinylbenzoate synthase (324 aa).

The active-site Proton donor is Lys-135. Mg(2+)-binding residues include Asp-163, Glu-192, and Asp-215. The active-site Proton acceptor is Lys-237.

This sequence belongs to the mandelate racemase/muconate lactonizing enzyme family. MenC type 1 subfamily. A divalent metal cation is required as a cofactor.

It carries out the reaction (1R,6R)-6-hydroxy-2-succinyl-cyclohexa-2,4-diene-1-carboxylate = 2-succinylbenzoate + H2O. The protein operates within quinol/quinone metabolism; 1,4-dihydroxy-2-naphthoate biosynthesis; 1,4-dihydroxy-2-naphthoate from chorismate: step 4/7. Its pathway is quinol/quinone metabolism; menaquinone biosynthesis. In terms of biological role, converts 2-succinyl-6-hydroxy-2,4-cyclohexadiene-1-carboxylate (SHCHC) to 2-succinylbenzoate (OSB). The protein is o-succinylbenzoate synthase of Aliivibrio salmonicida (strain LFI1238) (Vibrio salmonicida (strain LFI1238)).